Consider the following 368-residue polypeptide: 2-aminoethylphosphonate--pyruvate transaminase (368 aa).

Lys-192 carries the post-translational modification N6-(pyridoxal phosphate)lysine.

Belongs to the class-V pyridoxal-phosphate-dependent aminotransferase family. PhnW subfamily. In terms of assembly, homodimer. The cofactor is pyridoxal 5'-phosphate.

The enzyme catalyses (2-aminoethyl)phosphonate + pyruvate = phosphonoacetaldehyde + L-alanine. Involved in phosphonate degradation. The polypeptide is 2-aminoethylphosphonate--pyruvate transaminase (Pseudomonas putida (strain ATCC 700007 / DSM 6899 / JCM 31910 / BCRC 17059 / LMG 24140 / F1)).